Consider the following 65-residue polypeptide: Muscarinic toxin-like protein 3 (65 aa).

Intrachain disulfides connect cysteine 3–cysteine 24, cysteine 17–cysteine 41, cysteine 45–cysteine 57, and cysteine 58–cysteine 63.

In terms of assembly, homodimer; non-covalently linked. In terms of tissue distribution, expressed by the venom gland.

It localises to the secreted. In terms of biological role, antagonist of muscle and neuronal nicotinic acetylcholine receptors (nAChR) with highest affinity for neuronal alpha-7/CHRNA7 nAChRs. This is Muscarinic toxin-like protein 3 from Naja kaouthia (Monocled cobra).